The chain runs to 45 residues: Photosystem II reaction center protein K (45 aa).

A propeptide spanning residues 1 to 8 is cleaved from the precursor; the sequence is METIYLLA. The chain crosses the membrane as a helical span at residues 16–40; that stretch reads IFDPLVDVLPVIPLFFLALAFVWQA.

This sequence belongs to the PsbK family. PSII is composed of 1 copy each of membrane proteins PsbA, PsbB, PsbC, PsbD, PsbE, PsbF, PsbH, PsbI, PsbJ, PsbK, PsbL, PsbM, PsbT, PsbX, PsbY, PsbZ, Psb30/Ycf12, peripheral proteins PsbO, CyanoQ (PsbQ), PsbU, PsbV and a large number of cofactors. It forms dimeric complexes.

It localises to the cellular thylakoid membrane. In terms of biological role, one of the components of the core complex of photosystem II (PSII). PSII is a light-driven water:plastoquinone oxidoreductase that uses light energy to abstract electrons from H(2)O, generating O(2) and a proton gradient subsequently used for ATP formation. It consists of a core antenna complex that captures photons, and an electron transfer chain that converts photonic excitation into a charge separation. The protein is Photosystem II reaction center protein K of Synechocystis sp. (strain ATCC 27184 / PCC 6803 / Kazusa).